Consider the following 72-residue polypeptide: Sperm protein associated with the nucleus on the X chromosome N1 (72 aa).

A disordered region spans residues 1-40; sequence MEKPTSSTNGEKRKSPCDSNNKNDEMQETPNRDLVLEPSL. The span at 10–35 shows a compositional bias: basic and acidic residues; the sequence is GEKRKSPCDSNNKNDEMQETPNRDLV.

Belongs to the SPAN-X family.

The chain is Sperm protein associated with the nucleus on the X chromosome N1 (SPANXN1) from Gorilla gorilla gorilla (Western lowland gorilla).